A 257-amino-acid chain; its full sequence is Type III pantothenate kinase (257 aa).

An ATP-binding site is contributed by 6-13 (DAGNTNIV). Substrate-binding positions include Tyr100 and 107-110 (GADR). Asp109 (proton acceptor) is an active-site residue. Asp129 serves as a coordination point for K(+). An ATP-binding site is contributed by Thr132. Residue Thr184 coordinates substrate.

This sequence belongs to the type III pantothenate kinase family. Homodimer. The cofactor is NH4(+). K(+) is required as a cofactor.

The protein localises to the cytoplasm. It carries out the reaction (R)-pantothenate + ATP = (R)-4'-phosphopantothenate + ADP + H(+). It functions in the pathway cofactor biosynthesis; coenzyme A biosynthesis; CoA from (R)-pantothenate: step 1/5. Its function is as follows. Catalyzes the phosphorylation of pantothenate (Pan), the first step in CoA biosynthesis. The protein is Type III pantothenate kinase of Clostridium botulinum (strain Alaska E43 / Type E3).